The chain runs to 258 residues: Spindlin-2B (258 aa).

Residues 1 to 23 (MKTPNAQEAEGQQTRAAAGRATG) show a composition bias toward low complexity. The interval 1–49 (MKTPNAQEAEGQQTRAAAGRATGSANMTKKKVSQKKQRGRPSSQPRRNI) is disordered. Over residues 28 to 39 (TKKKVSQKKQRG) the composition is skewed to basic residues. Tudor-like domain regions lie at residues 50–99 (VGCR…LELH), 129–178 (IGKA…YQLL), and 210–255 (IGKH…YDLV). 2 histone H3K4me3 and H3R8me2a binding regions span residues Glu138 and 246 to 248 (DFH).

It belongs to the SPIN/STSY family. Interacts with C11orf84/SPINDOC. In terms of tissue distribution, detected in all the examined tissues with highest expression in liver, followed by heart, stomach, kidney, skeletal muscle, placenta, and pancreas.

Its subcellular location is the nucleus. Involved in the regulation of cell cycle progression, this activity is related to the inhibition of apoptosis following the removal of essential growth factors. Exhibits H3K4me3-binding activity. This chain is Spindlin-2B (SPIN2B), found in Homo sapiens (Human).